The chain runs to 511 residues: Acetylcholine receptor subunit alpha-type unc-38 (511 aa).

The first 16 residues, 1 to 16 (MRSFWLFLLLLLFCIS), serve as a signal peptide directing secretion. The Extracellular segment spans residues 17–261 (FIKLTEGNED…QLRRKPLFYT (245 aa)). A glycan (N-linked (GlcNAc...) asparagine) is linked at asparagine 124. A disulfide bond links cysteine 151 and cysteine 165. An N-linked (GlcNAc...) asparagine glycan is attached at asparagine 202. Residues cysteine 238 and cysteine 239 are joined by a disulfide bond. 3 helical membrane-spanning segments follow: residues 262-282 (VNLVFPCVGISFLTILVFYLP), 291-311 (LCISILVALTIFFLLLTEIIP), and 324-344 (LLFTMVMVTLSVVVTVISLNL). Residues 345–464 (HFRTPTTHLM…WKYVAMVLDR (120 aa)) are Cytoplasmic-facing. The chain crosses the membrane as a helical span at residues 465–485 (LFLLIFSIACFVGTVIILLRA).

Belongs to the ligand-gated ion channel (TC 1.A.9) family. Acetylcholine receptor (TC 1.A.9.1) subfamily. As to quaternary structure, component of nicotinic acetylcholine receptor. In muscles, composed of 2 non-alpha subunits lev-1 and unc-29, and 3 alpha subunits unc-38, unc-63 and lev-8. In cholinergic motoneurons, composed of 2 non-alpha subunits acr-2 and acr-3, and 3 alpha subunits unc-38, unc-63 and acr-12.

It is found in the postsynaptic cell membrane. The protein localises to the cell membrane. Alpha subunit of nicotinic acetylcholine receptor (nAChR). Probably acts in cholinergic motoneurons to regulate presynaptic neurotransmitter release, thereby ensuring normal level of excitation of cholinergic motoneurons during locomotion. Involved in nAChR sensitivity to nicotine. The sequence is that of Acetylcholine receptor subunit alpha-type unc-38 (unc-38) from Caenorhabditis elegans.